Here is a 216-residue protein sequence, read N- to C-terminus: Ras-related protein Rab-5C (216 aa).

GTP-binding residues include serine 30, alanine 31, glycine 33, lysine 34, serine 35, serine 36, histidine 47, glutamate 48, threonine 53, glycine 79, asparagine 134, lysine 135, aspartate 137, alanine 165, and lysine 166. Mg(2+) is bound at residue serine 35. Short sequence motifs (switch) lie at residues 45-57 and 78-94; these read QFHE…IGAA and AGQE…YRGA. Threonine 53 is a binding site for Mg(2+). Positions 184–216 are disordered; the sequence is KNEPQNAPGGPGRNRVVDLQESSQPSRSQCCSN. Residues 203 to 216 show a composition bias toward polar residues; it reads QESSQPSRSQCCSN. 2 S-geranylgeranyl cysteine lipidation sites follow: cysteine 213 and cysteine 214.

The protein belongs to the small GTPase superfamily. Rab family. The cofactor is Mg(2+). As to expression, detected in brain, ovary, rectum, small intestine, large intestine, liver, spleen, follicle and kidney (at protein level).

It is found in the cell membrane. It localises to the early endosome membrane. It catalyses the reaction GTP + H2O = GDP + phosphate + H(+). With respect to regulation, regulated by guanine nucleotide exchange factors (GEFs) which promote the exchange of bound GDP for free GTP. Regulated by GTPase activating proteins (GAPs) which increase the GTP hydrolysis activity. Inhibited by GDP dissociation inhibitors (GDIs). Functionally, the small GTPases Rab are key regulators of intracellular membrane trafficking, from the formation of transport vesicles to their fusion with membranes. Rabs cycle between an inactive GDP-bound form and an active GTP-bound form that is able to recruit to membranes different sets of downstream effectors directly responsible for vesicle formation, movement, tethering and fusion. The protein is Ras-related protein Rab-5C (RAB5C) of Gallus gallus (Chicken).